The following is a 270-amino-acid chain: UPF0354 protein BPUM_2629 (270 aa).

It belongs to the UPF0354 family.

This Bacillus pumilus (strain SAFR-032) protein is UPF0354 protein BPUM_2629.